The following is a 370-amino-acid chain: Cell division protein DivIB (370 aa).

The tract at residues 1 to 65 (MKKKKDEELT…SNKKGTKRIV (65 aa)) is disordered. Over 1 to 74 (MKKKKDEELT…VKEQRLSRQK (74 aa)) the chain is Cytoplasmic. Basic residues-rich tracts occupy residues 25–34 (SRFKRKRKAT) and 47–63 (RNNR…GTKR). A helical membrane pass occupies residues 75-95 (LGILIGSTLIVIALFFGYFYS). Topologically, residues 96–370 (SISRVQKFSV…STVNTQQDID (275 aa)) are extracellular. The POTRA domain occupies 98–169 (SRVQKFSVSG…GKVKIKVKEN (72 aa)). The tract at residues 295–370 (SGWTDEAKAA…STVNTQQDID (76 aa)) is disordered. 2 stretches are compositionally biased toward low complexity: residues 304 to 314 (ASESSKSAESS) and 327 to 342 (SESA…STET). Positions 356 to 370 (SSNAESTVNTQQDID) are enriched in polar residues.

The protein belongs to the FtsQ/DivIB family. DivIB subfamily.

The protein resides in the cell membrane. Functionally, cell division protein that may be involved in stabilizing or promoting the assembly of the division complex. In Pediococcus pentosaceus (strain ATCC 25745 / CCUG 21536 / LMG 10740 / 183-1w), this protein is Cell division protein DivIB.